Consider the following 273-residue polypeptide: Thymidylate synthase (273 aa).

DUMP is bound at residue R31. H61 provides a ligand contact to (6R)-5,10-methylene-5,6,7,8-tetrahydrofolate. 136–137 (RR) is a dUMP binding site. C156 functions as the Nucleophile in the catalytic mechanism. DUMP contacts are provided by residues 176-179 (RSAD), N187, and 217-219 (HIY). Residue D179 participates in (6R)-5,10-methylene-5,6,7,8-tetrahydrofolate binding. (6R)-5,10-methylene-5,6,7,8-tetrahydrofolate is bound at residue A272.

It belongs to the thymidylate synthase family. Bacterial-type ThyA subfamily. In terms of assembly, homodimer.

The protein resides in the cytoplasm. The enzyme catalyses dUMP + (6R)-5,10-methylene-5,6,7,8-tetrahydrofolate = 7,8-dihydrofolate + dTMP. It participates in pyrimidine metabolism; dTTP biosynthesis. Catalyzes the reductive methylation of 2'-deoxyuridine-5'-monophosphate (dUMP) to 2'-deoxythymidine-5'-monophosphate (dTMP) while utilizing 5,10-methylenetetrahydrofolate (mTHF) as the methyl donor and reductant in the reaction, yielding dihydrofolate (DHF) as a by-product. This enzymatic reaction provides an intracellular de novo source of dTMP, an essential precursor for DNA biosynthesis. The sequence is that of Thymidylate synthase from Corynebacterium jeikeium (strain K411).